The primary structure comprises 649 residues: Quinol oxidase subunit 1 (649 aa).

Topologically, residues 1-15 are extracellular; the sequence is MKFKWDEFFVTGDPL. A helical transmembrane segment spans residues 16-34; it reads ILGAQVSIALSTIAIIFVL. Over 35 to 56 the chain is Cytoplasmic; the sequence is TYFKKWKWLWSEWITTVDHKKL. The chain crosses the membrane as a helical span at residues 57–75; the sequence is GIMYIISAVIMLFRGGVDG. The Extracellular portion of the chain corresponds to 76–97; that stretch reads LMMRAQLALPNNSFLDSNHYNE. A helical transmembrane segment spans residues 98-117; it reads IFTTHGTIMIIFMAMPFLIG. Residue histidine 102 participates in Fe(II)-heme a binding. Residues 118–139 lie on the Cytoplasmic side of the membrane; the sequence is LINVVVPLQIGARDVAFPYLNN. Residues 140 to 157 form a helical membrane-spanning segment; it reads LSFWTFFVGAMLFNISFV. Residues 158 to 190 are Extracellular-facing; that stretch reads IGGSPNAGWTSYMPLASNDMSPGPGENYYLLGL. The helical transmembrane segment at 191-209 threads the bilayer; the sequence is QIAGIGTLMTGINFMVTIL. The Cytoplasmic portion of the chain corresponds to 210–227; it reads KMRTKGMTLMRMPMFTWT. Residues 228-246 traverse the membrane as a helical segment; that stretch reads TLITMVIIVFAFPVLTVAL. The Extracellular portion of the chain corresponds to 247–272; it reads ALLSFDRLFGAHFFTLEAGGMPMLWA. Residues 273–292 traverse the membrane as a helical segment; it reads NLFWIWGHPEVYIVILPAFG. Residues histidine 280 and tyrosine 284 each coordinate Cu cation. The segment at residues 280 to 284 is a cross-link (1'-histidyl-3'-tyrosine (His-Tyr)); the sequence is HPEVY. The Cytoplasmic portion of the chain corresponds to 293-315; the sequence is IFSEIISSFARKQLFGYKAMVGS. Residues 316–335 form a helical membrane-spanning segment; sequence IIAISVLSFLVWTHHFFTMG. Positions 329 and 330 each coordinate Cu cation. The Extracellular portion of the chain corresponds to 336–343; sequence NSASVNSF. Residues 344–362 form a helical membrane-spanning segment; sequence FSITTMAISIPTGVKIFNW. Residues 363–377 lie on the Cytoplasmic side of the membrane; sequence LFTMYKGRISFTTPM. Residues 378–397 form a helical membrane-spanning segment; sequence LWALAFIPNFVIGGVTGVML. Topologically, residues 398-405 are extracellular; sequence AMAAADYQ. Residues 406-425 traverse the membrane as a helical segment; sequence YHNTYFLVSHFHYVLIAGTV. Heme a3 is bound at residue histidine 415. Histidine 417 contacts Fe(II)-heme a. At 426 to 452 the chain is on the cytoplasmic side; that stretch reads FACFAGFIFWYPKMFGHKLNERIGKWF. Residues 453–472 form a helical membrane-spanning segment; it reads FWIFMIGFNICFFPQYFLGL. Over 473 to 490 the chain is Extracellular; it reads QGMPRRIYTYGPNDGWTT. Residues 491–510 form a helical membrane-spanning segment; that stretch reads LNFISTVGAFMMGVGFLILC. Topologically, residues 511–584 are cytoplasmic; that stretch reads YNIYYSFRYS…SKFKKIHMPS (74 aa). The chain crosses the membrane as a helical span at residues 585-604; the sequence is NSGRPFFMSVAFGLAGFGLV. Topologically, residues 605–610 are extracellular; that stretch reads FEWYWM. The chain crosses the membrane as a helical span at residues 611 to 631; it reads GVVGLIGVLLCMVLRSFEYDN. The Cytoplasmic segment spans residues 632-649; the sequence is GYYISVDEIKETERKISE.

It belongs to the heme-copper respiratory oxidase family. Cu cation serves as cofactor. Ferriheme a is required as a cofactor. The cofactor is Heme A3..

Its subcellular location is the cell membrane. The catalysed reaction is 2 a quinol + O2 = 2 a quinone + 2 H2O. It functions in the pathway energy metabolism; oxidative phosphorylation. In terms of biological role, catalyzes quinol oxidation with the concomitant reduction of oxygen to water. Major component for energy conversion during vegetative growth. The polypeptide is Quinol oxidase subunit 1 (qoxB) (Bacillus subtilis (strain 168)).